The primary structure comprises 289 residues: Cell division protein ZipA (289 aa).

A topological domain (periplasmic) is located at residue methionine 1. Residues 2 to 22 (EIGLREWLIVIGIIVIAGILF) traverse the membrane as a helical segment. Topologically, residues 23 to 289 (DGWRRMRGSK…ERRALTQRRG (267 aa)) are cytoplasmic. The tract at residues 48–141 (DEEETTSAEV…KPAQRITEDK (94 aa)) is disordered. Composition is skewed to basic and acidic residues over residues 64-77 (LDTHKEPQLDEHDL), 85-106 (REGKRSNSDKRGNSDKKRKDEP), and 123-141 (GRDDDFPDDKPAQRITEDK).

It belongs to the ZipA family. As to quaternary structure, interacts with FtsZ via their C-terminal domains.

The protein resides in the cell inner membrane. Essential cell division protein that stabilizes the FtsZ protofilaments by cross-linking them and that serves as a cytoplasmic membrane anchor for the Z ring. Also required for the recruitment to the septal ring of downstream cell division proteins. The polypeptide is Cell division protein ZipA (Pseudomonas savastanoi pv. phaseolicola (strain 1448A / Race 6) (Pseudomonas syringae pv. phaseolicola (strain 1448A / Race 6))).